The chain runs to 368 residues: Flagellar P-ring protein (368 aa).

An N-terminal signal peptide occupies residues M1–A24.

The protein belongs to the FlgI family. In terms of assembly, the basal body constitutes a major portion of the flagellar organelle and consists of four rings (L,P,S, and M) mounted on a central rod.

The protein localises to the periplasm. It is found in the bacterial flagellum basal body. Functionally, assembles around the rod to form the L-ring and probably protects the motor/basal body from shearing forces during rotation. The polypeptide is Flagellar P-ring protein (Methylobacillus flagellatus (strain ATCC 51484 / DSM 6875 / VKM B-1610 / KT)).